The following is a 430-amino-acid chain: Elongation factor 1-gamma (430 aa).

A GST N-terminal domain is found at 2-84; it reads VAGKLYTYPE…YVANETLRGS (83 aa). A GST C-terminal domain is found at 85–213; sequence SDLEKAQIIQ…FKLCEKAGEF (129 aa). 2 stretches are compositionally biased toward basic and acidic residues: residues 232–255 and 269–278; these read KTEK…KEQE and PKSKDPFDEM. Residues 232–278 are disordered; it reads KTEKAPKAVKAKPEKKEVPKKEQEEPADAAEEALAAEPKSKDPFDEM. Positions 271-430 constitute an EF-1-gamma C-terminal domain; it reads SKDPFDEMPK…RKFNQGKIFK (160 aa).

In terms of assembly, EF-1 is composed of four subunits: alpha, beta, delta, and gamma.

In terms of biological role, probably plays a role in anchoring the complex to other cellular components. The protein is Elongation factor 1-gamma of Artemia salina (Brine shrimp).